The primary structure comprises 711 residues: Consortin (711 aa).

5 disordered regions span residues 1 to 157 (MDDS…NDPP), 294 to 332 (AVGT…GCHQ), 370 to 389 (ETAG…KDSS), 394 to 432 (PPTE…PGLI), and 457 to 496 (PRDQ…ESAL). Over 1–650 (MDDSDPPTYS…LEQDEVGGGS (650 aa)) the chain is Cytoplasmic. The segment covering 63–77 (VSEQDSLNNNESFPS) has biased composition (polar residues). The span at 109 to 120 (PAKRSPRAKKSS) shows a compositional bias: basic residues. Basic and acidic residues-rich tracts occupy residues 396 to 407 (TEDHCGVARDPK) and 457 to 471 (PRDQ…EPRQ). Polar residues predominate over residues 478 to 487 (DGKSAQSQAG). Residues 651-671 (CILLILLCIATVFLSVGGTAL) form a helical membrane-spanning segment. Residues 672–711 (YCTLGNIESPVCTDFADNVDFYYTKLLQGVAGLKHWVYLS) lie on the Extracellular side of the membrane.

The protein belongs to the CNST family. Interacts with connexins GJA1/CX43, GJB1/CX32, GJB2/CX26, GJB3/CX31, GJB6/CX30 and GJC1/CX45. Also interacts with GGA1 and GGA2. Does not interact with PANX1.

The protein resides in the cell membrane. It is found in the golgi apparatus. It localises to the trans-Golgi network membrane. The protein localises to the cytoplasmic vesicle. Its subcellular location is the secretory vesicle. Required for targeting of connexins to the plasma membrane. The sequence is that of Consortin (Cnst) from Mus musculus (Mouse).